The primary structure comprises 259 residues: Probable metal transport system ATP-binding protein CT_068 (259 aa).

The 233-residue stretch at 9 to 241 (WSVEDLCVNY…AIFQAYGCEL (233 aa)) folds into the ABC transporter domain. Residue 41 to 48 (GPNGAGKS) participates in ATP binding.

This sequence belongs to the ABC transporter superfamily.

The protein resides in the cell inner membrane. Part of an ATP-driven transport system CT_067/CT_068/CT_069/CT_070 for a metal. Probably responsible for energy coupling to the transport system. This is Probable metal transport system ATP-binding protein CT_068 from Chlamydia trachomatis serovar D (strain ATCC VR-885 / DSM 19411 / UW-3/Cx).